The sequence spans 428 residues: YTH domain-containing protein ECT1 (428 aa).

Residues 245–382 (AKFFVIKSYS…EHGTKIIKIF (138 aa)) form the YTH domain. RNA-binding positions include 251–253 (KSY), aspartate 257, 267–268 (WS), asparagine 300, tryptophan 324, tryptophan 329, and tryptophan 337.

As to quaternary structure, interacts (via C-terminus) with CIPK1. In terms of tissue distribution, expressed in root apex, shoot apex, lateral root primordia, stamens, carpels and trichomes.

It is found in the nucleus. The protein resides in the cytoplasm. Functionally, specifically recognizes and binds N6-methyladenosine (m6A)-containing RNAs, and regulates mRNA stability. M6A is a modification present at internal sites of mRNAs and some non-coding RNAs and plays a role in mRNA stability and processing. The sequence is that of YTH domain-containing protein ECT1 from Arabidopsis thaliana (Mouse-ear cress).